A 480-amino-acid polypeptide reads, in one-letter code: MRGMPLNSMKLFRITDVMRRKVRHIHFVGIGGIGMSGIAEVLLNLGYTVSGSDLRTSDTTEHLSSLGATVFQGHKASNLTDVDVVVTSTAVRKDNPEVLEAHRRSVPVIPRAEMLAELLKMKVSIAVSGSHGKTTTTSMIATVMASGGLDPTMVIGGKLGSIGSNARMGHGEFIVAEADESDGSFLKLSPSLAVITNIDREHLDFYRGIEDIKDAFLQFANIVPFYGSAVLCLDDPHIKTILSDIKRKTITYGMEPAADYRAQELRFNGAVTEYELYYRTECLGSVTLSVPGMFNVYNSLATVAVARELDMTFPDIQQGLKSYVGVGRRLEVKGKIAGVTVVDDYGHHPTEISATLAAARQVWKNRMIVVFQPHRYTRTQALFREFLGAFTEADLLIVTDIYPASEDPIEGVTAEALCDGIRSLTRREVRYIPNFSDITDYLMTVVQPGDTVITQGAGSVNSVGVSLLSRLKEVEDSRAA.

Gly-129–Thr-135 lines the ATP pocket.

It belongs to the MurCDEF family.

Its subcellular location is the cytoplasm. It carries out the reaction UDP-N-acetyl-alpha-D-muramate + L-alanine + ATP = UDP-N-acetyl-alpha-D-muramoyl-L-alanine + ADP + phosphate + H(+). Its pathway is cell wall biogenesis; peptidoglycan biosynthesis. Functionally, cell wall formation. This chain is UDP-N-acetylmuramate--L-alanine ligase, found in Syntrophus aciditrophicus (strain SB).